Here is a 261-residue protein sequence, read N- to C-terminus: Guanine nucleotide exchange factor BopE (261 aa).

Belongs to the GEF (guanine exchange factor) SopE family. In terms of assembly, monomer. Interacts with human CDC42.

Its subcellular location is the secreted. Activator for both CDC42 and RAC1 by directly interacting with these Rho GTPases and acting as a guanine nucleotide exchange factor (GEF). This activation results in actin cytoskeleton rearrangements and stimulates membrane ruffling, thus promoting bacterial entry into non-phagocytic cells. This is Guanine nucleotide exchange factor BopE (bopE) from Burkholderia mallei (strain NCTC 10247).